We begin with the raw amino-acid sequence, 122 residues long: Large ribosomal subunit protein uL18 (122 aa).

Residues 1–19 (MTKLSRKLQTQKRHRRLRR) show a composition bias toward basic residues. Residues 1-21 (MTKLSRKLQTQKRHRRLRRSV) form a disordered region.

Belongs to the universal ribosomal protein uL18 family. Part of the 50S ribosomal subunit; part of the 5S rRNA/L5/L18/L25 subcomplex. Contacts the 5S and 23S rRNAs.

Functionally, this is one of the proteins that bind and probably mediate the attachment of the 5S RNA into the large ribosomal subunit, where it forms part of the central protuberance. The protein is Large ribosomal subunit protein uL18 of Prochlorococcus marinus (strain MIT 9312).